The sequence spans 281 residues: Apulose-4-phosphate transketolase subunit A (281 aa).

Belongs to the transketolase family. As to quaternary structure, probable heterodimer composed of AptA and AptB. Requires thiamine diphosphate as cofactor.

The catalysed reaction is apulose 4-phosphate + D-glyceraldehyde 3-phosphate = D-xylulose 5-phosphate + dihydroxyacetone phosphate. Its pathway is carbohydrate metabolism. Functionally, involved in catabolism of D-apiose. Catalyzes the transfer of the glycolaldehyde group from apulose-4-phosphate to D-glyceraldehyde 3-phosphate, generating dihydroxyacetone phosphate and D-xylulose-5-phosphate. In Phocaeicola vulgatus (strain ATCC 8482 / DSM 1447 / JCM 5826 / CCUG 4940 / NBRC 14291 / NCTC 11154) (Bacteroides vulgatus), this protein is Apulose-4-phosphate transketolase subunit A.